A 208-amino-acid chain; its full sequence is uncharacterized protein (208 aa).

To E.coli YfjJ.

This is an uncharacterized protein from Escherichia coli (strain K12).